A 196-amino-acid chain; its full sequence is Pro-FMRFamide-related neuropeptide VF (196 aa).

The signal sequence occupies residues 1 to 26; sequence MEIISSKLFILLTLATSSLLTSNIFC. A propeptide spanning residues 27-55 is cleaved from the precursor; sequence ADELVMSNLHSKENYDKYSEPRGYPKGER. F92 bears the Phenylalanine amide mark. 2 propeptides span residues 95-99 and 115-121; these read NVQEE and NMEVSLV. The residue at position 131 (F131) is a Phenylalanine amide. Residues 134–196 constitute a propeptide that is removed on maturation; it reads TTTAKSVCRM…IDDAELKQEK (63 aa).

Belongs to the FARP (FMRFamide related peptide) family. In terms of tissue distribution, specifically expressed in the retina. As to expression, detected in the hypothalamus.

The protein localises to the secreted. Functionally, efficiently inhibits forskolin-induced production of cAMP. Acts as a potent negative regulator of gonadotropin synthesis and secretion. Induces secretion of prolactin. In terms of biological role, efficiently inhibits forskolin-induced production of cAMP. Blocks morphine-induced analgesia. Its function is as follows. Shows no inhibitory activity of forskolin-induced production of cAMP. This is Pro-FMRFamide-related neuropeptide VF from Homo sapiens (Human).